Here is a 145-residue protein sequence, read N- to C-terminus: D-aminoacyl-tRNA deacylase (145 aa).

The short motif at 137 to 138 (GP) is the Gly-cisPro motif, important for rejection of L-amino acids element.

It belongs to the DTD family. As to quaternary structure, homodimer.

It localises to the cytoplasm. The enzyme catalyses glycyl-tRNA(Ala) + H2O = tRNA(Ala) + glycine + H(+). It carries out the reaction a D-aminoacyl-tRNA + H2O = a tRNA + a D-alpha-amino acid + H(+). In terms of biological role, an aminoacyl-tRNA editing enzyme that deacylates mischarged D-aminoacyl-tRNAs. Also deacylates mischarged glycyl-tRNA(Ala), protecting cells against glycine mischarging by AlaRS. Acts via tRNA-based rather than protein-based catalysis; rejects L-amino acids rather than detecting D-amino acids in the active site. By recycling D-aminoacyl-tRNA to D-amino acids and free tRNA molecules, this enzyme counteracts the toxicity associated with the formation of D-aminoacyl-tRNA entities in vivo and helps enforce protein L-homochirality. This Salmonella paratyphi C (strain RKS4594) protein is D-aminoacyl-tRNA deacylase.